The primary structure comprises 430 residues: Glutamate-1-semialdehyde 2,1-aminomutase (430 aa).

The residue at position 265 (K265) is an N6-(pyridoxal phosphate)lysine.

Belongs to the class-III pyridoxal-phosphate-dependent aminotransferase family. HemL subfamily. In terms of assembly, homodimer. The cofactor is pyridoxal 5'-phosphate.

The protein localises to the cytoplasm. The enzyme catalyses (S)-4-amino-5-oxopentanoate = 5-aminolevulinate. Its pathway is porphyrin-containing compound metabolism; protoporphyrin-IX biosynthesis; 5-aminolevulinate from L-glutamyl-tRNA(Glu): step 2/2. The chain is Glutamate-1-semialdehyde 2,1-aminomutase (hemL) from Helicobacter pylori (strain J99 / ATCC 700824) (Campylobacter pylori J99).